The following is a 749-amino-acid chain: Protein Niban 2 (749 aa).

A lipid anchor (N-myristoyl glycine) is attached at Gly2. A PH domain is found at 68–192 (RIIFSGNLFQ…WQAVLQDCVR (125 aa)). Phosphoserine occurs at positions 568, 574, 607, 628, 647, 650, 669, 674, 685, 695, and 699. The tract at residues 589-749 (WGEQYGDSGD…EDSAGVQTEF (161 aa)) is disordered. The span at 710–719 (VDLEPPKPSD) shows a compositional bias: basic and acidic residues. The segment covering 723-749 (GEQVSSPGSRPPIHTTTEDSAGVQTEF) has biased composition (polar residues).

It belongs to the Niban family. In terms of processing, as apoptosis proceeds, degraded via an proteasome-independent pathway, probably by caspases.

The protein localises to the cytoplasm. It is found in the cytosol. Its subcellular location is the cell junction. The protein resides in the adherens junction. It localises to the membrane. Functionally, may play a role in apoptosis suppression. The protein is Protein Niban 2 of Mus musculus (Mouse).